A 392-amino-acid chain; its full sequence is Heat-inducible transcription repressor HrcA (392 aa).

It belongs to the HrcA family.

Functionally, negative regulator of class I heat shock genes (grpE-dnaK-dnaJ and groELS operons). Prevents heat-shock induction of these operons. The protein is Heat-inducible transcription repressor HrcA of Chlamydia trachomatis serovar L2 (strain ATCC VR-902B / DSM 19102 / 434/Bu).